A 542-amino-acid chain; its full sequence is Prolyl 3-hydroxylase OGFOD1 (542 aa).

The Fe2OG dioxygenase domain maps to 134 to 239; the sequence is DLESTIDMSC…RLSISGWFHG (106 aa). 2 residues coordinate Fe cation: histidine 155 and aspartate 157. Tyrosine 169 contributes to the 2-oxoglutarate binding site. Residue histidine 218 participates in Fe cation binding. Arginine 230 provides a ligand contact to 2-oxoglutarate. The disordered stretch occupies residues 371-435; it reads SEDEPEDKKE…AKKESSVPTC (65 aa). The segment covering 395-417 has biased composition (polar residues); that stretch reads SHSSSEPENSWAATSDSSLQSEG.

It belongs to the TPA1 family. Monomer. Fe(2+) serves as cofactor. The cofactor is L-ascorbate.

The protein resides in the cytoplasm. The protein localises to the nucleus. The catalysed reaction is [ribosomal protein uS12]-L-proline + 2-oxoglutarate + O2 = [ribosomal protein uS12]-(3S)-3-hydroxy-L-proline + succinate + CO2. Prolyl 3-hydroxylase that catalyzes 3-hydroxylation of 'Pro-62' of small ribosomal subunit uS12 (RPS23), thereby regulating protein translation termination efficiency. Involved in stress granule formation. The protein is Prolyl 3-hydroxylase OGFOD1 (OGFOD1) of Bos taurus (Bovine).